The chain runs to 95 residues: MDKATLTFTDVSITVNVPTGTRIIEMSEKVGSGITYGCREGECGTCMTHILEGSENLSEPTALEMRVLEENLGGKDDRLACQCRVLGGAVKVRPA.

One can recognise a 2Fe-2S ferredoxin-type domain in the interval 2-95 (DKATLTFTDV…LGGAVKVRPA (94 aa)). [2Fe-2S] cluster contacts are provided by C38, C43, C46, and C81.

Belongs to the 2Fe2S plant-type ferredoxin family. Requires [2Fe-2S] cluster as cofactor.

Functionally, ferredoxins are iron-sulfur proteins that transfer electrons in a wide variety of metabolic reactions. This ferredoxin is required for nitrogen fixation. The sequence is that of Ferredoxin-4 (fdxC) from Rhodobacter capsulatus (Rhodopseudomonas capsulata).